Reading from the N-terminus, the 352-residue chain is Photosystem II D2 protein (352 aa).

At 1–31 the chain is on the cytoplasmic side; the sequence is MTIAIGRAPAERGWFDILDDWLKRDRFVFVG. Residues 32–53 traverse the membrane as a helical segment; that stretch reads WSGILLFPCAYLALGGWLTGTT. Topologically, residues 54 to 108 are lumenal; sequence FVTSWYTHGLASSYLEGCNFLTVAVSTPANSMGHSLLLLWGPEAQGDFTRWCQLG. The helical transmembrane segment at 109-131 threads the bilayer; sequence GLWTFIALHGAFGLIGFMLRQFE. H117 provides a ligand contact to chlorophyll a. Residue Q129 coordinates pheophytin a. The Cytoplasmic segment spans residues 132 to 140; sequence IARLVGVRP. Residues 141 to 160 form a helical membrane-spanning segment; sequence YNAIAFSAPIAVFVSVFLIY. N142 is a pheophytin a binding site. At 161-193 the chain is on the lumenal side; that stretch reads PLGQSSWFFAPSFGVAAIFRFLLFFQGFHNWTL. Residues 194-217 traverse the membrane as a helical segment; it reads NPFHMMGVAGVLGGALLCAIHGAT. H197 is a chlorophyll a binding site. A plastoquinone-binding residues include H214 and F261. H214 contributes to the Fe cation binding site. Residues 218–265 are Cytoplasmic-facing; the sequence is VENTLFQDGEGASTFRAFNPTQAEETYSMVTANRFWSQIFGIAFSNKR. Residues 266 to 288 traverse the membrane as a helical segment; it reads WLHFFMLFVPVTGLWMSAIGVVG. H268 lines the Fe cation pocket. At 289–352 the chain is on the lumenal side; the sequence is LALNLRSYDF…EEVLPRGNAL (64 aa).

It belongs to the reaction center PufL/M/PsbA/D family. As to quaternary structure, PSII is composed of 1 copy each of membrane proteins PsbA, PsbB, PsbC, PsbD, PsbE, PsbF, PsbH, PsbI, PsbJ, PsbK, PsbL, PsbM, PsbT, PsbX, PsbY, PsbZ, Psb30/Ycf12, peripheral proteins PsbO, CyanoQ (PsbQ), PsbU, PsbV and a large number of cofactors. It forms dimeric complexes. Part of a photosystem II (PSII) assembly intermediate complex PSII-I; crystallized from a strain deleted of psbJ, it forms monomeric PSII before addition of the oxygen evolving complex. PSII-I includes 3 assembly factors not found in mature PSII (Psb27, Psb28 and Psb34). The cofactor is The D1/D2 heterodimer binds P680, chlorophylls that are the primary electron donor of PSII, and subsequent electron acceptors. It shares a non-heme iron and each subunit binds pheophytin, quinone, additional chlorophylls, carotenoids and lipids. There is also a Cl(-1) ion associated with D1 and D2, which is required for oxygen evolution. PSII binds additional chlorophylls, carotenoids and specific lipids..

The protein resides in the cellular thylakoid membrane. It carries out the reaction 2 a plastoquinone + 4 hnu + 2 H2O = 2 a plastoquinol + O2. In terms of biological role, photosystem II (PSII) is a light-driven water:plastoquinone oxidoreductase that uses light energy to abstract electrons from H(2)O, generating O(2) and a proton gradient subsequently used for ATP formation. It consists of a core antenna complex that captures photons, and an electron transfer chain that converts photonic excitation into a charge separation. The D1/D2 (PsbA/PsbD) reaction center heterodimer binds P680, the primary electron donor of PSII as well as several subsequent electron acceptors. D2 is needed for assembly of a stable PSII complex. The chain is Photosystem II D2 protein from Thermosynechococcus vestitus (strain NIES-2133 / IAM M-273 / BP-1).